The chain runs to 485 residues: Glycogen synthase (485 aa).

Lysine 15 contacts ADP-alpha-D-glucose.

The protein belongs to the glycosyltransferase 1 family. Bacterial/plant glycogen synthase subfamily.

It carries out the reaction [(1-&gt;4)-alpha-D-glucosyl](n) + ADP-alpha-D-glucose = [(1-&gt;4)-alpha-D-glucosyl](n+1) + ADP + H(+). Its pathway is glycan biosynthesis; glycogen biosynthesis. Its function is as follows. Synthesizes alpha-1,4-glucan chains using ADP-glucose. The protein is Glycogen synthase of Rhodospirillum rubrum (strain ATCC 11170 / ATH 1.1.1 / DSM 467 / LMG 4362 / NCIMB 8255 / S1).